We begin with the raw amino-acid sequence, 424 residues long: MDFSRRSFHRSLSSSLQAPVVSTVGMQRLGTTPSVYGGAGGRGIRISNSRHTVNYGSDLTGGGDLFVGNEKMAMQNLNDRLASYLEKVRTLEQSNSKLEVQIKQWYETNAPRAGRDYSAYYRQIEELRSQIKDAQLQNARCVLQIDNAKLAAEDFRLKYETERGIRLTVEADLQGLNKVFDDLTLHKTDLEIQIEELNKDLALLKKEHQEEVDGLHKHLGNTVNVEVDAAPGLNLGVIMNEMRQKYEVMAQKNLQEAKEQFERQTAVLQQQVTVNTEELKGTEVQLTELRRTSQSLEIELQSHLSMKESLEHTLEETKARYSSQLANLQSLLSSLEAQLMQIRSNMERQNNEYHILLDIKTRLEQEIATYRRLLEGEDVKTTEYQLSTLEERDIKKTRKIKTVVQEVVDGKVVSSEVKEVEENI.

Residues 1–69 (MDFSRRSFHR…TGGGDLFVGN (69 aa)) form a head region. At Ser-13 the chain carries Phosphoserine; by MAPKAPK2, MAPKAPK3 and PKC. The tract at residues 70-105 (EKMAMQNLNDRLASYLEKVRTLEQSNSKLEVQIKQW) is coil 1A. Residues 70-381 (EKMAMQNLND…RLLEGEDVKT (312 aa)) form the IF rod domain. The interval 106 to 123 (YETNAPRAGRDYSAYYRQ) is linker 1. Residues 124 to 215 (IEELRSQIKD…KEHQEEVDGL (92 aa)) form a coil 1B region. Residues 216-238 (HKHLGNTVNVEVDAAPGLNLGVI) form a linker 12 region. The tract at residues 239 to 377 (MNEMRQKYEV…ATYRRLLEGE (139 aa)) is coil 2. Positions 378-424 (DVKTTEYQLSTLEERDIKKTRKIKTVVQEVVDGKVVSSEVKEVEENI) are tail.

It belongs to the intermediate filament family. Heterotetramer of two type I and two type II keratins. Associates with KRT8. Post-translationally, hyperphosphorylation at Ser-13 occurs during the early stages of apoptosis but becomes less prominent during the later stages. Phosphorylation at Ser-13 also increases in response to stress brought on by cell injury. Proteolytically cleaved by caspases during apoptosis. Cleavage occurs at Asp-228. Expressed predominantly in the intestinal epithelium. Expressed in luminal cells of colonic mucosa. Also expressed in the Merkel cells of keratinized oral mucosa; specifically at the tips of some rete ridges of the gingival mucosa, in the basal layer of the palatal mucosa and in the taste buds of lingual mucosa.

It localises to the cytoplasm. Plays a significant role in maintaining keratin filament organization in intestinal epithelia. When phosphorylated, plays a role in the secretion of mucin in the small intestine. This chain is Keratin, type I cytoskeletal 20 (KRT20), found in Homo sapiens (Human).